Here is a 236-residue protein sequence, read N- to C-terminus: tRNA1(Val) (adenine(37)-N6)-methyltransferase (236 aa).

Belongs to the methyltransferase superfamily. tRNA (adenine-N(6)-)-methyltransferase family.

The protein localises to the cytoplasm. The catalysed reaction is adenosine(37) in tRNA1(Val) + S-adenosyl-L-methionine = N(6)-methyladenosine(37) in tRNA1(Val) + S-adenosyl-L-homocysteine + H(+). Its function is as follows. Specifically methylates the adenine in position 37 of tRNA(1)(Val) (anticodon cmo5UAC). In Actinobacillus pleuropneumoniae serotype 7 (strain AP76), this protein is tRNA1(Val) (adenine(37)-N6)-methyltransferase.